The following is a 505-amino-acid chain: uncharacterized protein (505 aa).

An N-terminal signal peptide occupies residues 1–22; it reads MAILKSALVGFICFLHFFIVNA. N-linked (GlcNAc...) asparagine glycans are attached at residues Asn-25 and Asn-114. Helical transmembrane passes span 181-201, 216-236, 266-286, 291-311, and 318-338; these read LFLN…WSFI, ISGV…YFYF, FLLL…GSLL, ILAG…FISP, and VILF…LWIV. Residue Asn-342 is glycosylated (N-linked (GlcNAc...) asparagine). Helical transmembrane passes span 365–385 and 400–420; these read IVIC…AILI and LLWF…MLTI. Asn-454 is a glycosylation site (N-linked (GlcNAc...) asparagine).

This sequence belongs to the LU7TM family.

Its subcellular location is the membrane. This is an uncharacterized protein from Schizosaccharomyces pombe (strain 972 / ATCC 24843) (Fission yeast).